We begin with the raw amino-acid sequence, 177 residues long: MFHFKLTPELRKELKDPLGKLIRGEIPKPYLMIREELERARHVVTVGDVVTENVLRLGIKPSLAIYDHKTKRQEYSPDIESDAVIMTVQNPPGTITKALLNAIKKGFGLAERGRKVYIKVCGEEDLAAIPAVLYAPEGSVVLYGQPDEGVVLIKVTPECKLKCGRLMSKMEVVRDGD.

GTP is bound by residues aspartate 48, valine 49, valine 50, aspartate 67, lysine 69, glutamate 124, and aspartate 147.

It belongs to the GTP-dependent DPCK family.

It catalyses the reaction 3'-dephospho-CoA + GTP = GDP + CoA + H(+). It participates in cofactor biosynthesis; coenzyme A biosynthesis. Functionally, catalyzes the GTP-dependent phosphorylation of the 3'-hydroxyl group of dephosphocoenzyme A to form coenzyme A (CoA). The polypeptide is GTP-dependent dephospho-CoA kinase (Thermococcus onnurineus (strain NA1)).